The sequence spans 60 residues: Metallothionein (60 aa).

At Met-1 the chain carries N-acetylmethionine. The beta stretch occupies residues 1 to 28; it reads MDPCECSKTGTCNCGGSCTCKNCSCTTC. A divalent metal cation contacts are provided by Cys-4, Cys-6, Cys-12, Cys-14, Cys-18, Cys-20, Cys-23, Cys-25, Cys-28, Cys-32, Cys-33, Cys-35, Cys-36, Cys-40, Cys-43, Cys-47, Cys-49, Cys-54, Cys-58, and Cys-59. An alpha region spans residues 29-60; sequence NKSCCPCCPSGCPKCASGCVCKGKTCDTSCCQ.

This sequence belongs to the metallothionein superfamily. Type 1 family.

Its function is as follows. Metallothioneins have a high content of cysteine residues that bind various heavy metals. The sequence is that of Metallothionein (mt) from Pleuronectes platessa (European plaice).